Consider the following 706-residue polypeptide: Transmembrane and coiled-coil domains protein 2 (706 aa).

Disordered regions lie at residues 1–221 (MKRC…TTDT) and 251–280 (VALSLPSGPGHGDSDGPISLDVPDGAPDPQ). S6 carries the phosphoserine modification. The segment covering 83–94 (GLKHLFHSRRRS) has biased composition (basic residues). Residues 102-112 (SQEAQQQQQQQ) show a composition bias toward low complexity. Residues 120–131 (PDEKERSPEMHR) are compositionally biased toward basic and acidic residues. Omega-N-methylarginine is present on R163. A coiled-coil region spans residues 330–365 (KQVFEKKNQKSAQTIAQLHKKLEHYRRRLKEIEQNG). Phosphoserine is present on S435. The disordered stretch occupies residues 440-459 (AHLKDPMEDGPPEEAARALS). Phosphoserine is present on residues S461 and S467. Residues 464-510 (LVSSPKYGSDDECSSASASSAGAGSNSGAGPGGALGSPRSNTLYGAP) are disordered. Residues 477-487 (SSASASSAGAG) are compositionally biased toward low complexity. A compositionally biased stretch (gly residues) spans 488 to 498 (SNSGAGPGGAL). S500 bears the Phosphoserine mark. Residues 511 to 630 (GNLDTLLEEL…QQQQVVQLEG (120 aa)) are a coiled coil. 2 helical membrane passes run 646–666 (VILALMAVLLVFVSTIANFIT) and 679–699 (ALLLLVLFLLWKHWASLTYLL).

This sequence belongs to the TEX28 family. May form homodimers and heterodimers with TMCC2 or TMCC3 via the coiled-coil domains. Interacts with ribosomal proteins RPL4 and RPS6. Interacts with APOE and proteolytic processed C-terminal fragment C99 of the amyloid precursor protein (APP C99).

The protein localises to the endoplasmic reticulum membrane. Its function is as follows. May be involved in the regulation of the proteolytic processing of the amyloid precursor protein (APP) possibly also implicating APOE. This chain is Transmembrane and coiled-coil domains protein 2, found in Mus musculus (Mouse).